Here is a 769-residue protein sequence, read N- to C-terminus: Multiple C2 domain and transmembrane region protein 5 (769 aa).

C2 domains lie at 23–143 (SVTG…PQWY), 184–305 (PEGV…SRWF), and 345–467 (YSSD…THSY). Positions 56, 62, 109, 111, and 116 each coordinate Ca(2+). A run of 2 helical transmembrane segments spans residues 604–624 (IILV…LFLI) and 712–732 (LFVL…FQVV).

This sequence belongs to the MCTP family. Requires Ca(2+) as cofactor. Highly expressed in roots meristems and shoot apical meristems (SAMs). Observed in flowers.

It localises to the endoplasmic reticulum membrane. Its function is as follows. May function as a signaling molecule by regulating the trafficking of other regulators. The chain is Multiple C2 domain and transmembrane region protein 5 from Arabidopsis thaliana (Mouse-ear cress).